A 242-amino-acid polypeptide reads, in one-letter code: Uridylate kinase (242 aa).

11–14 (KLSG) serves as a coordination point for ATP. The interval 19 to 24 (GEKGAG) is involved in allosteric activation by GTP. A UMP-binding site is contributed by G53. Positions 54 and 58 each coordinate ATP. UMP is bound by residues D73 and 134-141 (IGSPYFST). ATP is bound by residues N162, Y168, and D171.

The protein belongs to the UMP kinase family. As to quaternary structure, homohexamer.

It is found in the cytoplasm. It carries out the reaction UMP + ATP = UDP + ADP. The protein operates within pyrimidine metabolism; CTP biosynthesis via de novo pathway; UDP from UMP (UMPK route): step 1/1. With respect to regulation, allosterically activated by GTP. Inhibited by UTP. Functionally, catalyzes the reversible phosphorylation of UMP to UDP. This is Uridylate kinase from Streptococcus pyogenes serotype M2 (strain MGAS10270).